The sequence spans 96 residues: ATP synthase subunit f, mitochondrial (96 aa).

This sequence belongs to the ATPase F chain family.

The protein localises to the mitochondrion. It is found in the mitochondrion inner membrane. Its function is as follows. Mitochondrial membrane ATP synthase (F(1)F(0) ATP synthase or Complex V) produces ATP from ADP in the presence of a proton gradient across the membrane which is generated by electron transport complexes of the respiratory chain. F-type ATPases consist of two structural domains, F(1) - containing the extramembraneous catalytic core and F(0) - containing the membrane proton channel, linked together by a central stalk and a peripheral stalk. During catalysis, ATP synthesis in the catalytic domain of F(1) is coupled via a rotary mechanism of the central stalk subunits to proton translocation. The protein is ATP synthase subunit f, mitochondrial (atp17) of Schizosaccharomyces pombe (strain 972 / ATCC 24843) (Fission yeast).